Consider the following 753-residue polypeptide: A-kinase anchor protein 200 (753 aa).

5 disordered regions span residues 1–345 (MGKA…QIEA), 462–482 (VETR…PSRV), 531–604 (TEQE…IDPA), 620–641 (VEKE…SDEQ), and 658–684 (VEET…DKEN). A lipid anchor (N-myristoyl glycine) is attached at Gly2. 2 stretches are compositionally biased toward basic and acidic residues: residues 8–38 (RSID…DQKT) and 59–77 (AVEK…DLTT). Positions 81–93 (AAVAEGGDAVAET) are enriched in low complexity. Residues 119-148 (KSKSKKDKVKKKWSFRSISFGKKDKQKPAK) are F-actin binding. The segment covering 120–132 (SKSKKDKVKKKWS) has biased composition (basic residues). Residues Ser132, Ser135, and Ser137 each carry the phosphoserine modification. The span at 139–151 (GKKDKQKPAKSEE) shows a compositional bias: basic and acidic residues. Low complexity predominate over residues 152–181 (ATSPTSGTTSPTTAEAEAAPAGDAAVAEPS). A compositionally biased stretch (basic and acidic residues) spans 216 to 227 (EQEKQANGETEK). Over residues 246–262 (EPATVTATESNTTATEE) the composition is skewed to low complexity. The segment at 345–725 (ASSEVIETVT…AEQEGESNNK (381 aa)) is interaction with PKA-R2. The segment covering 468 to 480 (SPPPPLPKSPPPS) has biased composition (pro residues). Basic and acidic residues predominate over residues 532–544 (EQEKQQEEAKVDS). Over residues 545–561 (VPETIEESSSTVVVEEV) the composition is skewed to low complexity. The span at 578 to 594 (DVQKPIEDQDTPDEKES) shows a compositional bias: basic and acidic residues. Over residues 626–638 (SISSNVAESSSVS) the composition is skewed to low complexity. Over residues 674-684 (EEAHSDNDKEN) the composition is skewed to basic and acidic residues.

In terms of assembly, homodimer. Interacts with Cam; interaction is calcium-dependent and is inhibited by PKC-mediated phosphorylation of Akap200. Interacts with N/Notch; the interaction stabilizes N/Notch protein levels by preventing Cbl-mediated ubiquitination and subsequent lysosomal degradation of N/Notch. Interacts with Pka-R2. Binds to F-actin; interaction is independent of myristoylation, but is inhibited by Akap200 phosphorylation and Cam binding. Isoform B: Does not bind to Pka-R2. Post-translationally, myristoylated; myristoylation promotes accumulation at the cell periphery. In terms of processing, phosphorylated; phosphorylation prevents binding to F-actin and Cam. As to expression, detected in the brain in both neurons and glia (including perineurial glia); specifically in the neuronal nuclei in the cortex and synaptic neuropil (at protein level). Detected in germline cells, somatic follicle cells and outer rim of the ring canals during oogenesis (at protein level). Isoform A: Detected in the adult (at protein level). Isoform B: Detected in the adult with higher levels in the head (at protein level).

It is found in the cytoplasm. It localises to the cytosol. The protein localises to the cell membrane. The protein resides in the cytoskeleton. Functionally, scaffolding protein involved in the regulation of PKA signaling and anchoring to the actin cytoskeleton integrating signals propagated by cAMP, diacylglycerol and calcium. Contributes to the maintenance and regulation of cytoskeletal structures in germline via PKA-mediated signaling. As part of ethanol response in the glia, mediates ethanol-induced structural remodeling of actin cytoskeleton and perineurial membrane topology by anchoring PKA to the membrane of perineurial glia. In specific tissues such as eye and thorax, promotes N/Notch protein stability by inhibiting Cbl-mediated ubiquitination and lysosomal degradation pathway of N/Notch in a PKA-independent way. In the circadian brain neurons evening cells (E-cells), might have a role in circadian pacemaker synchronization by playing a redundant role in signaling downstream of the G protein-couple receptor Pdfr. This chain is A-kinase anchor protein 200, found in Drosophila melanogaster (Fruit fly).